The chain runs to 493 residues: uncharacterized protein (493 aa).

Residues Leu316–Ser403 are disordered. The span at Glu338–Ser353 shows a compositional bias: low complexity. The segment covering Ser371–Asn398 has biased composition (polar residues).

This sequence belongs to the mimivirus R69 family.

This is an uncharacterized protein from Acanthamoeba polyphaga (Amoeba).